A 360-amino-acid chain; its full sequence is Peptide chain release factor 1 (360 aa).

Glutamine 235 is subject to N5-methylglutamine.

Belongs to the prokaryotic/mitochondrial release factor family. Post-translationally, methylated by PrmC. Methylation increases the termination efficiency of RF1.

The protein localises to the cytoplasm. In terms of biological role, peptide chain release factor 1 directs the termination of translation in response to the peptide chain termination codons UAG and UAA. The sequence is that of Peptide chain release factor 1 from Cupriavidus taiwanensis (strain DSM 17343 / BCRC 17206 / CCUG 44338 / CIP 107171 / LMG 19424 / R1) (Ralstonia taiwanensis (strain LMG 19424)).